The sequence spans 1055 residues: Activated CDC42 kinase 1 (1055 aa).

An SAM-like domain region spans residues 1 to 110 (MQPEEGTGWL…PSPTPGSLPG (110 aa)). The disordered stretch occupies residues 91 to 110 (SQHSQSTFRKPSPTPGSLPG). A Phosphothreonine modification is found at Thr-113. Residues 126 to 385 (LRLLEKLGDG…PTFVALRDFL (260 aa)) form the Protein kinase domain. Residues 132–140 (LGDGSFGVV) and Lys-158 each bind ATP. Asp-252 (proton acceptor) is an active-site residue. Tyr-284 is modified (phosphotyrosine; by SRC and autocatalysis). Residues 388 to 448 (AQPTDMRALQ…PRNVVTSVAG (61 aa)) form the SH3 domain. The region spanning 454–466 (ISQPLQNSFIHTG) is the CRIB domain. The tract at residues 505–548 (RPTQHLGRVKREPPPRPPQPAIFTQKTTYDPVSEDPDPLSSDFK) is disordered. Phosphotyrosine is present on residues Pro-518 and Tyr-533. A required for interaction with SRC region spans residues 638–667 (DWDARPLPPPPAYDDVAQDEDDFEVCSINS). The interval 647–650 (PPAY) is required for interaction with NEDD4. Positions 737–855 (TGQLTPSPTP…QVIQAPGPRA (119 aa)) are disordered. An EBD domain region spans residues 748–891 (GDDKPQVPPR…PYLERYQRFL (144 aa)). 2 stretches are compositionally biased toward pro residues: residues 753 to 764 (QVPPRVPIPPRP) and 787 to 798 (PASPPRVPPREP). The span at 817-827 (PLPHRLSSSPG) shows a compositional bias: low complexity. Tyr-842 is modified (phosphotyrosine). The residue at position 854 (Arg-854) is an Omega-N-methylarginine. Tyr-874 and Tyr-887 each carry phosphotyrosine. Residue Ser-896 is modified to Phosphoserine. The disordered stretch occupies residues 896 to 952 (SPEEPAALPVPPLLPPPSTPAPAAPTATVRPMPQAAPDPKANFSTNNSNPGARPPSL). Residues 903 to 918 (LPVPPLLPPPSTPAPA) are compositionally biased toward pro residues. One can recognise a UBA domain in the interval 973–1013 (PADKVQMLQAMVHGVTTEECQAALQSHSWSVQRAAQYLKVE).

The protein belongs to the protein kinase superfamily. Tyr protein kinase family. As to quaternary structure, homodimer. Interacts with CSPG4 (activated). Interacts with MERTK (activated); stimulates autophosphorylation. May interact (phosphorylated) with HSP90AB1; maintains kinase activity. Interacts with NPHP1. Interacts with SNX9 (via SH3 domain). Interacts with SRC (via SH2 and SH3 domain). Part of a collagen stimulated complex involved in cell migration composed of CDC42, CRK, TNK2 and BCAR1/p130cas. Interacts with BCAR1/p130cas via SH3 domains. Forms complexes with GRB2 and numerous receptor tyrosine kinases (RTK) including LTK, AXL or PDGFRL, in which GRB2 promotes RTK recruitment by TNK2. Interacts with CDC42. Interacts with EGFR, and this interaction is dependent on EGF stimulation and kinase activity of EGFR. Interacts (via kinase domain) with AKT1. Interacts with NEDD4 (via WW3 domain). NEDD4L and EGF promote association with NEDD4. Requires Mg(2+) as cofactor. Post-translationally, autophosphorylation regulates kinase activity. Phosphorylation on Tyr-533 is required for interaction with SRC and is observed during association with clathrin-coated pits. Polyubiquitinated by NEDD4 and NEDD4L. Degradation can be induced by EGF and is lysosome-dependent. As to expression, ubiquitously present in all tissues tested. Highly expressed in the adult central nervous system (CNS); hippocampus, neocortex, and cerebellum, both at dendritic spines and presynaptic axon terminals. Levels are strongly increased during enhanced neural activity.

It localises to the cell membrane. It is found in the nucleus. The protein resides in the endosome. The protein localises to the cell junction. Its subcellular location is the adherens junction. It localises to the cytoplasmic vesicle membrane. It is found in the cytoplasmic vesicle. The protein resides in the clathrin-coated vesicle. The protein localises to the membrane. Its subcellular location is the clathrin-coated pit. It localises to the cytoplasm. It is found in the cytosol. The enzyme catalyses L-tyrosyl-[protein] + ATP = O-phospho-L-tyrosyl-[protein] + ADP + H(+). The catalysed reaction is L-seryl-[protein] + ATP = O-phospho-L-seryl-[protein] + ADP + H(+). It carries out the reaction L-threonyl-[protein] + ATP = O-phospho-L-threonyl-[protein] + ADP + H(+). In terms of biological role, non-receptor tyrosine-protein and serine/threonine-protein kinase that is implicated in cell spreading and migration, cell survival, cell growth and proliferation. Transduces extracellular signals to cytosolic and nuclear effectors. Phosphorylates AKT1, AR, MCF2, WASL and WWOX. Implicated in trafficking and clathrin-mediated endocytosis through binding to epidermal growth factor receptor (EGFR) and clathrin. Binds to both poly- and mono-ubiquitin and regulates ligand-induced degradation of EGFR, thereby contributing to the accumulation of EGFR at the limiting membrane of early endosomes. Downstream effector of CDC42 which mediates CDC42-dependent cell migration via phosphorylation of BCAR1. May be involved both in adult synaptic function and plasticity and in brain development. Activates AKT1 by phosphorylating it on 'Tyr-176'. Phosphorylates AR on 'Tyr-267' and 'Tyr-363' thereby promoting its recruitment to androgen-responsive enhancers (AREs). Phosphorylates WWOX on 'Tyr-287'. Phosphorylates MCF2, thereby enhancing its activity as a guanine nucleotide exchange factor (GEF) toward Rho family proteins. Contributes to the control of AXL receptor levels. Confers metastatic properties on cancer cells and promotes tumor growth by negatively regulating tumor suppressor such as WWOX and positively regulating pro-survival factors such as AKT1 and AR. The chain is Activated CDC42 kinase 1 (Tnk2) from Mus musculus (Mouse).